The chain runs to 361 residues: Peptide chain release factor 1 (361 aa).

An N5-methylglutamine modification is found at Gln-236. Positions 285 to 309 (TAKDSARAADRKAQVGSGDRSERIR) are enriched in basic and acidic residues. A disordered region spans residues 285-313 (TAKDSARAADRKAQVGSGDRSERIRTYNF).

This sequence belongs to the prokaryotic/mitochondrial release factor family. Post-translationally, methylated by PrmC. Methylation increases the termination efficiency of RF1.

Its subcellular location is the cytoplasm. Functionally, peptide chain release factor 1 directs the termination of translation in response to the peptide chain termination codons UAG and UAA. In Methylorubrum populi (strain ATCC BAA-705 / NCIMB 13946 / BJ001) (Methylobacterium populi), this protein is Peptide chain release factor 1.